Reading from the N-terminus, the 24-residue chain is Retinol-binding protein 3 (24 aa).

It localises to the secreted. It is found in the extracellular space. The protein localises to the extracellular matrix. Its subcellular location is the interphotoreceptor matrix. Functionally, IRBP shuttles 11-cis and all trans retinoids between the retinol isomerase in the pigment epithelium and the visual pigments in the photoreceptor cells of the retina. This is Retinol-binding protein 3 (RBP3) from Ovis aries (Sheep).